The following is a 165-amino-acid chain: MPPLATMSSPGSLLLLTPAVYQGIGRNRGGQSQEGQSISSSRSLKTKLSVSARAVSSCEASMRITCCANQTQTARRKSFSGPTSPPSGSVKEKVRSPKLDDGGTGFPPFRFGGGGGGGGGGGSNSAGGFILFVIVLLLDYLREFERNLQNGTRRGSDYDNGLAPQ.

A chloroplast-targeting transit peptide spans 1-51; sequence MPPLATMSSPGSLLLLTPAVYQGIGRNRGGQSQEGQSISSSRSLKTKLSVS. The segment at 71–118 is disordered; the sequence is TQTARRKSFSGPTSPPSGSVKEKVRSPKLDDGGTGFPPFRFGGGGGGG. The span at 79–89 shows a compositional bias: low complexity; the sequence is FSGPTSPPSGS. The span at 90–101 shows a compositional bias: basic and acidic residues; that stretch reads VKEKVRSPKLDD.

Interacts with atpB. As to expression, highly expressed in leaves. Expressed in leaf sheaths. Expressed at low levels in stems.

It is found in the plastid. The protein resides in the chloroplast. In terms of biological role, required for photosynthetic protein complex assembly in chloroplast thylakoid membranes during leaf development. Maintains the abundance of the core protein complex PsaA-PsaB of photosystem I (PSI) in the thylakoid membrane. May play a role in the efficient biogenesis of the chloroplast ATP synthase complex, possibly by interacting with the beta subunit atpB. In Oryza sativa subsp. japonica (Rice), this protein is Protein YELLOW LEAF 1, choloroplastic.